Consider the following 416-residue polypeptide: Heat shock protein DDB_G0280215 (416 aa).

The 114-residue stretch at 37 to 150 (SMDWGWKPRM…SQHISLFGRE (114 aa)) folds into the sHSP domain. Positions 216–235 (ETKERERRIRDTKGETEKKK) are disordered.

It belongs to the small heat shock protein (HSP20) family.

The polypeptide is Heat shock protein DDB_G0280215 (Dictyostelium discoideum (Social amoeba)).